The sequence spans 246 residues: Probable transcriptional regulatory protein HAPS_0943 (246 aa).

Belongs to the TACO1 family.

It localises to the cytoplasm. In Glaesserella parasuis serovar 5 (strain SH0165) (Haemophilus parasuis), this protein is Probable transcriptional regulatory protein HAPS_0943.